Reading from the N-terminus, the 299-residue chain is MQSNPVEQAALAYAGTRLKQTDAPLSAETQPGGVALHVQQVIKRYDGREVLHRIELTAAPGEFVAIVGRSGCGKSTLLRLVAGLECADEGAITLDAQPARTLQQDIRVMFQDSRLLPWKRVLENVALGLPRERREEAAAVLAQVGLRDRADAWPARLSGGQRQRVALARSLVHHPRLLLLDEPLGALDALTRIEMQGLIESLWRRLGFTALLVTHDVSEAVALADRIVLIEDGHIAMDERVALPRPRQHGSAAFAQIEERVLRRVMQHTPDAEGVSQSEQEATADWSLVRTVESVRFAV.

The 222-residue stretch at 36–257 (LHVQQVIKRY…QHGSAAFAQI (222 aa)) folds into the ABC transporter domain. 68–75 (GRSGCGKS) lines the ATP pocket.

This sequence belongs to the ABC transporter superfamily. Aliphatic sulfonates importer (TC 3.A.1.17.2) family. In terms of assembly, the complex is composed of two ATP-binding proteins (SsuB), two transmembrane proteins (SsuC) and a solute-binding protein (SsuA).

It localises to the cell inner membrane. The catalysed reaction is ATP + H2O + aliphatic sulfonate-[sulfonate-binding protein]Side 1 = ADP + phosphate + aliphatic sulfonateSide 2 + [sulfonate-binding protein]Side 1.. Its function is as follows. Part of the ABC transporter complex SsuABC involved in aliphatic sulfonates import. Responsible for energy coupling to the transport system. In Cupriavidus pinatubonensis (strain JMP 134 / LMG 1197) (Cupriavidus necator (strain JMP 134)), this protein is Aliphatic sulfonates import ATP-binding protein SsuB.